Consider the following 517-residue polypeptide: Synaptic vesicular amine transporter (517 aa).

The Cytoplasmic portion of the chain corresponds to 1–20 (MALSDLVLLRWLRDSRHSRK). The helical transmembrane segment at 21–41 (LILFIVFLALLLDNMLLTVVV) threads the bilayer. Over 42–132 (PIIPSYLYSI…EDKDLLNENV (91 aa)) the chain is Extracellular. N-linked (GlcNAc...) asparagine glycosylation is found at Asn56, Asn83, Asn84, Asn91, and Asn113. The disordered stretch occupies residues 100 to 119 (ESPKATTTQHTVTNTTVPPD). Residues 105 to 115 (TTTQHTVTNTT) are compositionally biased toward low complexity. A disulfide bridge connects residues Cys120 and Cys327. A helical membrane pass occupies residues 133–153 (QVGLLFASKATVQLLTNPFIG). The Cytoplasmic portion of the chain corresponds to 154 to 162 (LLTNRIGYP). Residues 163 to 183 (IPMFAGFCIMFISTVMFAFSS) form a helical membrane-spanning segment. The Extracellular portion of the chain corresponds to 184 to 192 (SYAFLLIAR). The helical transmembrane segment at 193-213 (SLQGIGSSCSSVAGMGMLASV) threads the bilayer. Residues 214-222 (YTDDEERGN) lie on the Cytoplasmic side of the membrane. The chain crosses the membrane as a helical span at residues 223–245 (AMGIALGGLAMGVLVGPPFGSVL). Leu231 and Val235 together coordinate serotonin. Residues 246–251 (YEFVGK) lie on the Extracellular side of the membrane. A helical membrane pass occupies residues 252–274 (TAPFLVLAALVLLDGAIQLFVLQ). At 275–294 (PSRVQPESQKGTPLTTLLKD) the chain is on the cytoplasmic side. Residues 295–314 (PYILIAAGSICFANMGIAML) traverse the membrane as a helical segment. Residues Asn308, Ile311, Glu315, Phe337, and Tyr344 each contribute to the serotonin site. The Extracellular portion of the chain corresponds to 315-331 (EPALPIWMMETMCSRKW). The chain crosses the membrane as a helical span at residues 332–355 (QLGVAFLPASISYLIGTNIFGILA). At 356-360 (HKMGR) the chain is on the cytoplasmic side. Residues 361–381 (WLCALLGMIVVGISILCIPFA) form a helical membrane-spanning segment. The Extracellular segment spans residues 382 to 392 (KNIYGLIAPNF). A helical membrane pass occupies residues 393–413 (GVGFAIGMVDSSMMPIMGYLV). Asp402 contacts serotonin. Topologically, residues 414-417 (DLRH) are cytoplasmic. The helical transmembrane segment at 418–438 (VSVYGSVYAIADVAFCMGYAI) threads the bilayer. Tyr436 serves as a coordination point for serotonin. The Extracellular segment spans residues 439–443 (GPSAG). The chain crosses the membrane as a helical span at residues 444 to 465 (GAIAKAIGFPWLMTIIGIIDIV). Residues 466-517 (FAPLCFFLRSPPAKEEKMAILMDHNCPIKTKMYTQNNVQPYPVGDDEESESD) are Cytoplasmic-facing. Ser514 and Ser516 each carry phosphoserine; by CK2.

It belongs to the major facilitator superfamily. Vesicular transporter family. Interacts with SLC6A3. In terms of tissue distribution, expressed in striata and substantia nigra.

It localises to the cytoplasmic vesicle. The protein localises to the secretory vesicle. The protein resides in the synaptic vesicle membrane. It is found in the secretory vesicle membrane. Its subcellular location is the cell projection. It localises to the axon. The protein localises to the dendrite. It carries out the reaction serotonin(in) + 2 H(+)(out) = serotonin(out) + 2 H(+)(in). The enzyme catalyses dopamine(in) + 2 H(+)(out) = dopamine(out) + 2 H(+)(in). The catalysed reaction is histamine(in) + 2 H(+)(out) = histamine(out) + 2 H(+)(in). With respect to regulation, strongly inhibited by reserpine and tetrabenazine. Also inhibited to a lesser extent by ketanserin and fenfluramine. Reserpine and ketanserin inhibit by blocking the substrate-binding pocket. Tetrabenazine traps SLC18A2/VMAT2 in an occluded conformation and its inhibition is specific to SLC18A2/VMAT2 but not SLC18A1/VMAT1. Its function is as follows. Electrogenic antiporter that exchanges one cationic monoamine with two intravesicular protons across the membrane of secretory and synaptic vesicles. Uses the electrochemical proton gradient established by the V-type proton-pump ATPase to accumulate high concentrations of monoamines inside the vesicles prior to their release via exocytosis. Transports a variety of catecholamines such as dopamine, adrenaline and noradrenaline, histamine, and indolamines such as serotonin. Regulates the transvesicular monoaminergic gradient that determines the quantal size. Mediates somatodendritic dopamine release in hippocampal neurons, likely as part of a regulated secretory pathway that integrates retrograde synaptic signals. Acts as a primary transporter for striatal dopamine loading ensuring impulse-dependent release of dopamine at the synaptic cleft. Responsible for histamine and serotonin storage and subsequent corelease from mast cell granules. This is Synaptic vesicular amine transporter (Slc18a2) from Mus musculus (Mouse).